A 483-amino-acid chain; its full sequence is MKRWWFNSMLFKKEFEHRCRLSKSTSSLGPIENAIESKDPNINDTDKNIQSWGGHDNYSNVDLFFGVKDIRNFISDDTFLVKDSNGDIYSIYFDIENHIFEIDNDHSFCSELESSFYRNSSYLNNGSKSKNPQHDPYMNDTQYTWNNHINSCIDSYLQSQICIDSYIVSGSDNSSNNYISSSICCESGNSSKNADARTSDQIIRESSTDLDVTQKYRHLWVQCENCYGLNYKKFFKSKMNLCEQCGYHLKMSSSDRIELSIDPGTWEPMDEDMVSLDPIEFHSEEEPYKNRIDSYQRKTGLTEAVQTGIGQLDGINVAIAVMDFQFMGGSMGSVVGEKITRLIEYATKEFLPLIIVCASGGARMQEGSLSLMQMAKISSALYDYQSNKKLFYVPILTSPTTGGVTASFGMLGDIIIAEPNAYIAFAGKRVIEQTLNKTVPDGSQAAEYLFQKGLFDLIVPRNPLKSVLSELFQLHTFFPLNQN.

The 265-residue stretch at 219 to 483 folds into the CoA carboxyltransferase N-terminal domain; that stretch reads LWVQCENCYG…LHTFFPLNQN (265 aa). The Zn(2+) site is built by cysteine 223, cysteine 226, cysteine 242, and cysteine 245. The segment at 223–245 adopts a C4-type zinc-finger fold; it reads CENCYGLNYKKFFKSKMNLCEQC.

It belongs to the AccD/PCCB family. Acetyl-CoA carboxylase is a heterohexamer composed of biotin carboxyl carrier protein, biotin carboxylase and 2 subunits each of ACCase subunit alpha and ACCase plastid-coded subunit beta (accD). Zn(2+) is required as a cofactor.

It is found in the plastid. It localises to the chloroplast stroma. It carries out the reaction N(6)-carboxybiotinyl-L-lysyl-[protein] + acetyl-CoA = N(6)-biotinyl-L-lysyl-[protein] + malonyl-CoA. The protein operates within lipid metabolism; malonyl-CoA biosynthesis; malonyl-CoA from acetyl-CoA: step 1/1. In terms of biological role, component of the acetyl coenzyme A carboxylase (ACC) complex. Biotin carboxylase (BC) catalyzes the carboxylation of biotin on its carrier protein (BCCP) and then the CO(2) group is transferred by the transcarboxylase to acetyl-CoA to form malonyl-CoA. This chain is Acetyl-coenzyme A carboxylase carboxyl transferase subunit beta, chloroplastic, found in Guizotia abyssinica (Niger).